The chain runs to 238 residues: Sugar fermentation stimulation protein homolog (238 aa).

The protein belongs to the SfsA family.

The polypeptide is Sugar fermentation stimulation protein homolog (Bartonella tribocorum (strain CIP 105476 / IBS 506)).